The following is a 231-amino-acid chain: Ion-translocating oxidoreductase complex subunit E (231 aa).

The next 6 helical transmembrane spans lie at 18–38, 39–59, 63–83, 86–106, 125–145, and 182–202; these read ALVQLLGLCPLLAVTSTATNA, LGLGLATTLVLTLTNLTISTL, TPAEIRIPIYVMIIASVVSAV, LINAYAFGLYQSLGIFIPLIV, ALSALDGFSIGMGATCAMCVL, and PFLLAMLPPGAFIGLGLMLAG.

It belongs to the NqrDE/RnfAE family. The complex is composed of six subunits: RsxA, RsxB, RsxC, RsxD, RsxE and RsxG.

Its subcellular location is the cell inner membrane. Its function is as follows. Part of a membrane-bound complex that couples electron transfer with translocation of ions across the membrane. Required to maintain the reduced state of SoxR. This chain is Ion-translocating oxidoreductase complex subunit E, found in Escherichia coli (strain SMS-3-5 / SECEC).